A 633-amino-acid chain; its full sequence is Telomere-binding protein 1 (633 aa).

The tract at residues 253–272 is disordered; it reads HAADRDDDENSSGCVHPSTS. Positions 263–272 are enriched in polar residues; that stretch reads SSGCVHPSTS. The 80-residue stretch at 351 to 430 folds into the Ubiquitin-like domain; sequence VKLTIKSFNI…LNDIGFTLEC (80 aa). Positions 506–615 are sufficient for telomeric DNA binding; the sequence is PFADPNSLAL…RVLAAQAYWS (110 aa). Residues 529–588 form the HTH myb-type domain; that stretch reads GQRRIRRPFTVAEVELLVEAVEHLGTGRWRDVKFRAFENVHHRTYVDLKDKWKTLVHTAS. In terms of domain architecture, SANT spans 534–584; sequence RRPFTVAEVELLVEAVEHLGTGRWRDVKFRAFENVHHRTYVDLKDKWKTLV. A DNA-binding region (H-T-H motif) is located at residues 557-584; sequence WRDVKFRAFENVHHRTYVDLKDKWKTLV.

In terms of assembly, homodimer. Ubiquitous.

The protein resides in the chromosome. The protein localises to the telomere. Binds the telomeric double-stranded 5'TTTAGGG-3' repeat and regulates telomere length and structure. This is Telomere-binding protein 1 (TBP1) from Oryza sativa subsp. japonica (Rice).